Here is a 1142-residue protein sequence, read N- to C-terminus: Desmoglein-2.1 (1142 aa).

The N-terminal stretch at 1 to 18 (MARRISPVVAFLLCFGLS) is a signal peptide. Positions 19–38 (HFFEAEARLQHSVALHRQKR) are excised as a propeptide. At 39–643 (EWIVPPQILE…AKKGSRLGPA (605 aa)) the chain is on the extracellular side. 4 Cadherin domains span residues 64 to 148 (SDKE…APVF), 156 to 258 (VDEL…VPTL), 259 to 416 (GGPY…GPKF), and 417 to 527 (FPGT…CPTL). An N-linked (GlcNAc...) asparagine glycan is attached at Asn115. Positions 369–389 (SGAAGGAGAMGGASGSGGGTG) are disordered. Asn490 and Asn576 each carry an N-linked (GlcNAc...) asparagine glycan. A helical membrane pass occupies residues 644–664 (GIGLLLLALLALLLIPLLLLL). Over 665-1142 (CTCGMTGAFT…RKVVTTQSVK (478 aa)) the chain is Cytoplasmic. Desmoglein repeat repeat units lie at residues 948–974 (VEQQ…NSGP), 975–998 (VAEG…ERMV), 999–1039 (LVFR…VLQG), and 1040–1071 (TIQR…NGIS).

It localises to the cell junction. Its subcellular location is the desmosome. The protein resides in the cell membrane. The protein localises to the cytoplasm. A component of desmosome cell-cell junctions which are required for positive regulation of cellular adhesion. Involved in the interaction of plaque proteins and intermediate filaments mediating cell-cell adhesion. Required for embryogenesis, specifically for progression of epiboly and normal convergence-extension movements during gastrulation. This is Desmoglein-2.1 from Danio rerio (Zebrafish).